The chain runs to 975 residues: Glycine dehydrogenase (decarboxylating) (975 aa).

Residue Lys-723 is modified to N6-(pyridoxal phosphate)lysine.

The protein belongs to the GcvP family. In terms of assembly, the glycine cleavage system is composed of four proteins: P, T, L and H. Pyridoxal 5'-phosphate serves as cofactor.

The enzyme catalyses N(6)-[(R)-lipoyl]-L-lysyl-[glycine-cleavage complex H protein] + glycine + H(+) = N(6)-[(R)-S(8)-aminomethyldihydrolipoyl]-L-lysyl-[glycine-cleavage complex H protein] + CO2. Its function is as follows. The glycine cleavage system catalyzes the degradation of glycine. The P protein binds the alpha-amino group of glycine through its pyridoxal phosphate cofactor; CO(2) is released and the remaining methylamine moiety is then transferred to the lipoamide cofactor of the H protein. The sequence is that of Glycine dehydrogenase (decarboxylating) from Burkholderia orbicola (strain MC0-3).